The following is a 373-amino-acid chain: Valienol-1-phosphate guanylyltransferase (373 aa).

Substrate contacts are provided by residues G177 and 192–193 (EK).

This sequence belongs to the bacterial/plant glucose-1-phosphate adenylyltransferase family. Requires Mg(2+) as cofactor.

It catalyses the reaction valienol 1-phosphate + GTP + H(+) = GDP-valienol + diphosphate. Functionally, involved in the biosynthesis of the antifungal agent validamycin A. Catalyzes the conversion of valienol 1-phosphate to GDP-valienol and less effectively to ADP-valienol or other NDP derivatives. This chain is Valienol-1-phosphate guanylyltransferase, found in Streptomyces hygroscopicus subsp. limoneus.